We begin with the raw amino-acid sequence, 406 residues long: Argininosuccinate synthase (406 aa).

8–16 serves as a coordination point for ATP; it reads AYSGGLDTS. L-citrulline is bound at residue Tyr-86. Gly-116 contributes to the ATP binding site. Thr-118, Asn-122, and Asp-123 together coordinate L-aspartate. Asn-122 is a binding site for L-citrulline. L-citrulline-binding residues include Arg-126, Ser-174, Ser-183, Glu-259, and Tyr-271.

Belongs to the argininosuccinate synthase family. Type 1 subfamily. In terms of assembly, homotetramer.

It localises to the cytoplasm. It carries out the reaction L-citrulline + L-aspartate + ATP = 2-(N(omega)-L-arginino)succinate + AMP + diphosphate + H(+). It participates in amino-acid biosynthesis; L-arginine biosynthesis; L-arginine from L-ornithine and carbamoyl phosphate: step 2/3. In Oenococcus oeni (strain ATCC BAA-331 / PSU-1), this protein is Argininosuccinate synthase.